We begin with the raw amino-acid sequence, 367 residues long: Cyclin-D5-1 (367 aa).

Residues 307-333 (QPTSPASKSTTTTTGKRSSSSSCSEST) form a disordered region.

The protein belongs to the cyclin family. Cyclin D subfamily.

The polypeptide is Cyclin-D5-1 (CYCD5-1) (Oryza sativa subsp. japonica (Rice)).